The following is a 557-amino-acid chain: Probable asparagine synthetase [glutamine-hydrolyzing] (557 aa).

Cys2 (for GATase activity) is an active-site residue. The Glutamine amidotransferase type-2 domain occupies 2-188; the sequence is CGILAILNSL…PGHYFSSKTK (187 aa). Residues 50 to 54, 75 to 77, and Asp101 contribute to the L-glutamine site; these read RLAIV and NGE. The Asparagine synthetase domain occupies 217–466; sequence AIKEAFEQAV…LPSSVLWRQK (250 aa). Residues Leu239, Ile279, and 353–354 each bind ATP; that span reads SG. The interval 538 to 557 is disordered; sequence WGASQDPSGRAQKVHLSTTE.

The enzyme catalyses L-aspartate + L-glutamine + ATP + H2O = L-asparagine + L-glutamate + AMP + diphosphate + H(+). The protein operates within amino-acid biosynthesis; L-asparagine biosynthesis; L-asparagine from L-aspartate (L-Gln route): step 1/1. The protein is Probable asparagine synthetase [glutamine-hydrolyzing] (asns) of Dictyostelium discoideum (Social amoeba).